Here is a 578-residue protein sequence, read N- to C-terminus: Rhoptry protein 4 (578 aa).

The first 33 residues, 1 to 33 (MGHPTSFGQPSCLVWLAAAFLVLGLCLVQQGAG), serve as a signal peptide directing secretion. The interval 56–82 (VDKYSRDSTEGENTVSEGEAEGSRGGS) is disordered. One can recognise a Protein kinase domain in the interval 259-546 (LVRGRRIGLF…ALQAIETPEY (288 aa)). The interval 559–578 (LYSGDGTLTGGDDDMPPLET) is disordered. Residues 569-578 (GDDDMPPLET) are compositionally biased toward acidic residues.

Post-translationally, phosphorylated on multiple serine and threonine residues in parasitic extracts and infected cells but not in extracellular parasites.

Its subcellular location is the secreted. The protein resides in the parasitophorous vacuole membrane. Functionally, thought to play a role in parasitophorous vacuole membrane function during the infection of host organisms. The protein is Rhoptry protein 4 of Toxoplasma gondii.